We begin with the raw amino-acid sequence, 154 residues long: Endoribonuclease YbeY (154 aa).

Zn(2+) is bound by residues His-113, His-117, and His-123.

The protein belongs to the endoribonuclease YbeY family. Zn(2+) is required as a cofactor.

It localises to the cytoplasm. Functionally, single strand-specific metallo-endoribonuclease involved in late-stage 70S ribosome quality control and in maturation of the 3' terminus of the 16S rRNA. In Ehrlichia chaffeensis (strain ATCC CRL-10679 / Arkansas), this protein is Endoribonuclease YbeY.